The following is a 284-amino-acid chain: MLQNEVENFANLLEQATVYLAPYQEKIIVVKYGGNAMINEDRKKLVMQDILLLNQLGVKVVLVHGGGPEISQGVKLLGKEPQFINGLRVTDQDTINVVLQMLAGKVNKSLVALLKGKGVGLCGIDANMLQCEKLQAEVDYGFVGEIVKVNTQLLELALSANLIPVISTVGVDDQGVAYNINADTVASEIAMALGAAKLVSMTDIAGLLRDRFDESTLIPEVEVSEVQGLIDQGIIAGGMIPKIACCTDFINAGGIEANIIDGRVPHAILVSLFGGKNGTLFYKK.

Substrate-binding positions include 66 to 67 (GG), Arg-88, and Asn-179.

The protein belongs to the acetylglutamate kinase family. ArgB subfamily.

It is found in the cytoplasm. It carries out the reaction N-acetyl-L-glutamate + ATP = N-acetyl-L-glutamyl 5-phosphate + ADP. It participates in amino-acid biosynthesis; L-arginine biosynthesis; N(2)-acetyl-L-ornithine from L-glutamate: step 2/4. Functionally, catalyzes the ATP-dependent phosphorylation of N-acetyl-L-glutamate. The chain is Acetylglutamate kinase from Actinobacillus pleuropneumoniae serotype 5b (strain L20).